A 197-amino-acid chain; its full sequence is MARYRGPRVKIVRRLGELPGLTTKIPNRNYPAGQHGPSSGMTKMSQYRVRLQEKQKLRYNYGVSEKQLLSYVRRARRMKGPTGELLLQMLEMRLDAVVYRLGFAPTIRAARQYVSHGLVTVNGQAVTIPSYQCSVGEVIKSNSAPIVEHAKTFGGVVPSHLSVDKNNATGKVERNVTRSQIGLTVNELLIIEFYSRK.

The 62-residue stretch at 92–153 (MRLDAVVYRL…APIVEHAKTF (62 aa)) folds into the S4 RNA-binding domain.

This sequence belongs to the universal ribosomal protein uS4 family. As to quaternary structure, part of the 30S ribosomal subunit. Contacts protein S5. The interaction surface between S4 and S5 is involved in control of translational fidelity.

It localises to the plastid. It is found in the chloroplast. Functionally, one of the primary rRNA binding proteins, it binds directly to 16S rRNA where it nucleates assembly of the body of the 30S subunit. With S5 and S12 plays an important role in translational accuracy. The chain is Small ribosomal subunit protein uS4c (rps4) from Ostreococcus tauri.